The following is a 704-amino-acid chain: Ribosomal RNA large subunit methyltransferase K/L (704 aa).

Residues 43–154 (TMYQSLLWSR…KEKASLSLDL (112 aa)) enclose the THUMP domain.

It belongs to the methyltransferase superfamily. RlmKL family.

It is found in the cytoplasm. The catalysed reaction is guanosine(2445) in 23S rRNA + S-adenosyl-L-methionine = N(2)-methylguanosine(2445) in 23S rRNA + S-adenosyl-L-homocysteine + H(+). It catalyses the reaction guanosine(2069) in 23S rRNA + S-adenosyl-L-methionine = N(2)-methylguanosine(2069) in 23S rRNA + S-adenosyl-L-homocysteine + H(+). Specifically methylates the guanine in position 2445 (m2G2445) and the guanine in position 2069 (m7G2069) of 23S rRNA. The chain is Ribosomal RNA large subunit methyltransferase K/L from Proteus mirabilis (strain HI4320).